The sequence spans 1129 residues: Eukaryotic translation initiation factor 3 subunit A (1129 aa).

A PCI domain is found at 319–502; sequence LQRMAAHVLL…NSIYFGTDLT (184 aa). Disordered regions lie at residues 590-633 and 836-1129; these read NNAR…NEIQ and AAEA…VKRR. 5 stretches are compositionally biased toward basic and acidic residues: residues 836–903, 923–964, 971–985, 994–1044, and 1053–1076; these read AAEA…RSER, DRND…KDTD, WRVR…RERG, GRDD…DQPQ, and DSPR…RDIR. Gly residues predominate over residues 1080–1091; it reads PKEGGGGGGGGN. Over residues 1098–1119 the composition is skewed to basic and acidic residues; sequence PRDEKPPVKRDQPQDKENKAGD.

Belongs to the eIF-3 subunit A family. As to quaternary structure, component of the eukaryotic translation initiation factor 3 (eIF-3) complex. The eIF-3 complex interacts with pix.

The protein localises to the cytoplasm. In terms of biological role, RNA-binding component of the eukaryotic translation initiation factor 3 (eIF-3) complex, which is involved in protein synthesis of a specialized repertoire of mRNAs and, together with other initiation factors, stimulates binding of mRNA and methionyl-tRNAi to the 40S ribosome. The eIF-3 complex specifically targets and initiates translation of a subset of mRNAs involved in cell proliferation. This chain is Eukaryotic translation initiation factor 3 subunit A, found in Drosophila mojavensis (Fruit fly).